A 130-amino-acid chain; its full sequence is VQPSLGKESAAMKFERQHMDSTVATSSSPTYCNQMMKRRNMTQGQCKPVNTFVHESLADVHAVCSQENVKCKNGKSNCYKSHSALHITDCRLKGNAKYPNCDYQTSQHQKHIIVACEGNPFVPVHFDATV.

The first 6 residues, 1-6, serve as a signal peptide directing secretion; that stretch reads VQPSLG. Residues Lys13 and Arg16 each contribute to the substrate site. His18 acts as the Proton acceptor in catalysis. 4 cysteine pairs are disulfide-bonded: Cys32/Cys90, Cys46/Cys101, Cys64/Cys116, and Cys71/Cys78. Asn40 is a glycosylation site (N-linked (GlcNAc...) asparagine). Substrate contacts are provided by residues 47-51, Lys72, and Arg91; that span reads KPVNT. The active-site Proton donor is His125.

The protein belongs to the pancreatic ribonuclease family. In terms of assembly, monomer. Interacts with and forms tight 1:1 complexes with RNH1. Dimerization of two such complexes may occur. Interaction with RNH1 inhibits this protein. In terms of tissue distribution, pancreas.

Its subcellular location is the secreted. It carries out the reaction an [RNA] containing cytidine + H2O = an [RNA]-3'-cytidine-3'-phosphate + a 5'-hydroxy-ribonucleotide-3'-[RNA].. The enzyme catalyses an [RNA] containing uridine + H2O = an [RNA]-3'-uridine-3'-phosphate + a 5'-hydroxy-ribonucleotide-3'-[RNA].. Its function is as follows. Endonuclease that catalyzes the cleavage of RNA on the 3' side of pyrimidine nucleotides. Acts on single-stranded and double-stranded RNA. This is Ribonuclease pancreatic (RNASE1) from Cricetulus griseus (Chinese hamster).